Reading from the N-terminus, the 155-residue chain is Large ribosomal subunit protein bL17 (155 aa).

It belongs to the bacterial ribosomal protein bL17 family. As to quaternary structure, part of the 50S ribosomal subunit. Contacts protein L32.

This chain is Large ribosomal subunit protein bL17, found in Bifidobacterium adolescentis (strain ATCC 15703 / DSM 20083 / NCTC 11814 / E194a).